A 923-amino-acid chain; its full sequence is Ubiquitin carboxyl-terminal hydrolase 10 (923 aa).

The DUSP domain maps to 19-134 (FTPEEEKRIV…GGPPIERKLI (116 aa)). The disordered stretch occupies residues 65-91 (NECSTGESSEAPRPGPIDNHDIIESDS). Residues 304-895 (AGLSNLGNTC…AAYVLFYRRV (592 aa)) enclose the USP domain. Catalysis depends on cysteine 313, which acts as the Nucleophile. Histidine 853 acts as the Proton acceptor in catalysis.

It belongs to the peptidase C19 family.

The enzyme catalyses Thiol-dependent hydrolysis of ester, thioester, amide, peptide and isopeptide bonds formed by the C-terminal Gly of ubiquitin (a 76-residue protein attached to proteins as an intracellular targeting signal).. In terms of biological role, recognizes and hydrolyzes the peptide bond at the C-terminal Gly of ubiquitin. Involved in the processing of poly-ubiquitin precursors as well as that of ubiquitinated proteins. The chain is Ubiquitin carboxyl-terminal hydrolase 10 (UBP10) from Arabidopsis thaliana (Mouse-ear cress).